Here is a 206-residue protein sequence, read N- to C-terminus: Pyridoxine/pyridoxamine 5'-phosphate oxidase (206 aa).

FMN contacts are provided by residues Arg53 to Lys58, Tyr68 to Thr69, Lys75, and Gln97. Lys58 is a substrate binding site. Substrate is bound by residues Tyr115, Arg119, and Ser123. Residues Gln132–Ser133 and Trp177 each bind FMN. A substrate-binding site is contributed by Arg183–His185. Arg187 serves as a coordination point for FMN.

It belongs to the pyridoxamine 5'-phosphate oxidase family. In terms of assembly, homodimer. FMN is required as a cofactor.

The enzyme catalyses pyridoxamine 5'-phosphate + O2 + H2O = pyridoxal 5'-phosphate + H2O2 + NH4(+). It catalyses the reaction pyridoxine 5'-phosphate + O2 = pyridoxal 5'-phosphate + H2O2. Its pathway is cofactor metabolism; pyridoxal 5'-phosphate salvage; pyridoxal 5'-phosphate from pyridoxamine 5'-phosphate: step 1/1. It functions in the pathway cofactor metabolism; pyridoxal 5'-phosphate salvage; pyridoxal 5'-phosphate from pyridoxine 5'-phosphate: step 1/1. Its function is as follows. Catalyzes the oxidation of either pyridoxine 5'-phosphate (PNP) or pyridoxamine 5'-phosphate (PMP) into pyridoxal 5'-phosphate (PLP). In Allorhizobium ampelinum (strain ATCC BAA-846 / DSM 112012 / S4) (Agrobacterium vitis (strain S4)), this protein is Pyridoxine/pyridoxamine 5'-phosphate oxidase.